Consider the following 341-residue polypeptide: ATPase GET3 (341 aa).

Lys-34–Thr-41 contacts ATP. Residue Asp-63 is part of the active site. Glu-245 and Asn-272 together coordinate ATP. Residues Cys-283 and Cys-286 each coordinate Zn(2+).

It belongs to the arsA ATPase family. As to quaternary structure, homodimer.

Its subcellular location is the cytoplasm. The protein localises to the endoplasmic reticulum. Functionally, ATPase required for the post-translational delivery of tail-anchored (TA) proteins to the endoplasmic reticulum. Recognizes and selectively binds the transmembrane domain of TA proteins in the cytosol. This complex then targets to the endoplasmic reticulum by membrane-bound receptors, where the tail-anchored protein is released for insertion. This process is regulated by ATP binding and hydrolysis. ATP binding drives the homodimer towards the closed dimer state, facilitating recognition of newly synthesized TA membrane proteins. ATP hydrolysis is required for insertion. Subsequently, the homodimer reverts towards the open dimer state, lowering its affinity for the membrane-bound receptor, and returning it to the cytosol to initiate a new round of targeting. The polypeptide is ATPase GET3 (Ajellomyces capsulatus (strain H143) (Darling's disease fungus)).